A 113-amino-acid polypeptide reads, in one-letter code: Iron-sulfur cluster assembly protein CyaY (113 aa).

The protein belongs to the frataxin family.

Functionally, involved in iron-sulfur (Fe-S) cluster assembly. May act as a regulator of Fe-S biogenesis. This chain is Iron-sulfur cluster assembly protein CyaY, found in Ralstonia nicotianae (strain ATCC BAA-1114 / GMI1000) (Ralstonia solanacearum).